The chain runs to 72 residues: Exodeoxyribonuclease 7 small subunit (72 aa).

This sequence belongs to the XseB family. In terms of assembly, heterooligomer composed of large and small subunits.

Its subcellular location is the cytoplasm. The enzyme catalyses Exonucleolytic cleavage in either 5'- to 3'- or 3'- to 5'-direction to yield nucleoside 5'-phosphates.. Functionally, bidirectionally degrades single-stranded DNA into large acid-insoluble oligonucleotides, which are then degraded further into small acid-soluble oligonucleotides. This Chlamydia trachomatis serovar L2 (strain ATCC VR-902B / DSM 19102 / 434/Bu) protein is Exodeoxyribonuclease 7 small subunit.